Consider the following 100-residue polypeptide: MAKKSLIEREKKRQKLEKKYQDFRHSIKKKIKETSSLDEKWEFQKQLQALPRNSAPTRLHRRCFLTGRPRANYRDFGLSRHVLREMAHACFLPGVTKSSW.

The protein belongs to the universal ribosomal protein uS14 family. As to quaternary structure, part of the 30S ribosomal subunit.

Its subcellular location is the plastid. It localises to the chloroplast. Functionally, binds 16S rRNA, required for the assembly of 30S particles. In Physcomitrium patens (Spreading-leaved earth moss), this protein is Small ribosomal subunit protein uS14c.